The primary structure comprises 443 residues: L-ornithine N(5)-monooxygenase (443 aa).

FAD contacts are provided by residues 45-53 and Q64; that span reads DKQGDYRWH. K69 lines the substrate pocket. Position 130 (V130) interacts with FAD. NADP(+)-binding positions include 215 to 218 and R240; that span reads GGQS. Residues 254–257 and N284 contribute to the substrate site; that span reads NEVF. 284-286 contacts NADP(+); sequence NYS. 407-409 is an FAD binding site; sequence TLL. S410 provides a ligand contact to substrate.

This sequence belongs to the lysine N(6)-hydroxylase/L-ornithine N(5)-oxygenase family. In terms of assembly, homotetramer. Requires FAD as cofactor.

It is found in the cell inner membrane. The catalysed reaction is L-ornithine + NADPH + O2 = N(5)-hydroxy-L-ornithine + NADP(+) + H2O. Its pathway is siderophore biosynthesis; pyoverdin biosynthesis. In terms of biological role, catalyzes the conversion of L-ornithine to N(5)-hydroxyornithine, the first step in the biosynthesis of all hydroxamate-containing siderophores, such as pyoverdin. Pyoverdin is a hydroxamate siderophore composed of a 6,7-dihydroxyquinoline-containing fluorescent chromophore joined to the N-terminus of a partly cyclic octapeptide (D-Ser-L-Arg-D-Ser-L-N(5)-OH-Orn-L-Lys-L-N(5)-OH-Orn-L-Thr-L-Thr in strain PAO1). Specific for NADPH, which plays a role in stabilization of the C4a-hydroperoxyflavin intermediate. The sequence is that of L-ornithine N(5)-monooxygenase from Pseudomonas aeruginosa (strain ATCC 15692 / DSM 22644 / CIP 104116 / JCM 14847 / LMG 12228 / 1C / PRS 101 / PAO1).